A 41-amino-acid polypeptide reads, in one-letter code: MKVLSSLKSAKTRHRDCKVILRRGKIFVICKSNPRFKARQR.

Belongs to the bacterial ribosomal protein bL36 family.

The sequence is that of Large ribosomal subunit protein bL36 from Xylella fastidiosa (strain M23).